Here is a 423-residue protein sequence, read N- to C-terminus: Glucose-1-phosphate adenylyltransferase (423 aa).

Residues Tyr108, Gly173, 188–189 (EK), and Ser207 each bind alpha-D-glucose 1-phosphate.

The protein belongs to the bacterial/plant glucose-1-phosphate adenylyltransferase family. Homotetramer.

It carries out the reaction alpha-D-glucose 1-phosphate + ATP + H(+) = ADP-alpha-D-glucose + diphosphate. It functions in the pathway glycan biosynthesis; glycogen biosynthesis. Functionally, involved in the biosynthesis of ADP-glucose, a building block required for the elongation reactions to produce glycogen. Catalyzes the reaction between ATP and alpha-D-glucose 1-phosphate (G1P) to produce pyrophosphate and ADP-Glc. In Francisella tularensis subsp. tularensis (strain WY96-3418), this protein is Glucose-1-phosphate adenylyltransferase.